The primary structure comprises 184 residues: ATP synthase subunit b, chloroplastic (184 aa).

A helical transmembrane segment spans residues 27 to 49; it reads LATNPINLSVVLGVLVFFGKGVL.

The protein belongs to the ATPase B chain family. As to quaternary structure, F-type ATPases have 2 components, F(1) - the catalytic core - and F(0) - the membrane proton channel. F(1) has five subunits: alpha(3), beta(3), gamma(1), delta(1), epsilon(1). F(0) has four main subunits: a(1), b(1), b'(1) and c(10-14). The alpha and beta chains form an alternating ring which encloses part of the gamma chain. F(1) is attached to F(0) by a central stalk formed by the gamma and epsilon chains, while a peripheral stalk is formed by the delta, b and b' chains.

It is found in the plastid. Its subcellular location is the chloroplast thylakoid membrane. Functionally, f(1)F(0) ATP synthase produces ATP from ADP in the presence of a proton or sodium gradient. F-type ATPases consist of two structural domains, F(1) containing the extramembraneous catalytic core and F(0) containing the membrane proton channel, linked together by a central stalk and a peripheral stalk. During catalysis, ATP synthesis in the catalytic domain of F(1) is coupled via a rotary mechanism of the central stalk subunits to proton translocation. In terms of biological role, component of the F(0) channel, it forms part of the peripheral stalk, linking F(1) to F(0). This Phaseolus vulgaris (Kidney bean) protein is ATP synthase subunit b, chloroplastic.